A 226-amino-acid polypeptide reads, in one-letter code: Orotate phosphoribosyltransferase (226 aa).

5-phospho-alpha-D-ribose 1-diphosphate is bound by residues arginine 107, lysine 108, lysine 111, and 133–141 (EDLTTDGGS). Threonine 137 serves as a coordination point for orotate.

Belongs to the purine/pyrimidine phosphoribosyltransferase family. PyrE subfamily. In terms of assembly, homodimer. Requires Mg(2+) as cofactor.

It carries out the reaction orotidine 5'-phosphate + diphosphate = orotate + 5-phospho-alpha-D-ribose 1-diphosphate. It functions in the pathway pyrimidine metabolism; UMP biosynthesis via de novo pathway; UMP from orotate: step 1/2. Functionally, catalyzes the transfer of a ribosyl phosphate group from 5-phosphoribose 1-diphosphate to orotate, leading to the formation of orotidine monophosphate (OMP). In Ruegeria sp. (strain TM1040) (Silicibacter sp.), this protein is Orotate phosphoribosyltransferase.